Here is a 406-residue protein sequence, read N- to C-terminus: Dual-specificity RNA methyltransferase RlmN (406 aa).

The active-site Proton acceptor is Glu-121. One can recognise a Radical SAM core domain in the interval 127–377; it reads ERDRGTLCVS…VRTPRGRDIL (251 aa). Cysteines 134 and 380 form a disulfide. 3 residues coordinate [4Fe-4S] cluster: Cys-141, Cys-145, and Cys-148. S-adenosyl-L-methionine contacts are provided by residues 206–207, Ser-238, 260–262, and Asn-337; these read GE and SLH. The active-site S-methylcysteine intermediate is the Cys-380.

The protein belongs to the radical SAM superfamily. RlmN family. It depends on [4Fe-4S] cluster as a cofactor.

The protein localises to the cytoplasm. It carries out the reaction adenosine(2503) in 23S rRNA + 2 reduced [2Fe-2S]-[ferredoxin] + 2 S-adenosyl-L-methionine = 2-methyladenosine(2503) in 23S rRNA + 5'-deoxyadenosine + L-methionine + 2 oxidized [2Fe-2S]-[ferredoxin] + S-adenosyl-L-homocysteine. It catalyses the reaction adenosine(37) in tRNA + 2 reduced [2Fe-2S]-[ferredoxin] + 2 S-adenosyl-L-methionine = 2-methyladenosine(37) in tRNA + 5'-deoxyadenosine + L-methionine + 2 oxidized [2Fe-2S]-[ferredoxin] + S-adenosyl-L-homocysteine. Functionally, specifically methylates position 2 of adenine 2503 in 23S rRNA and position 2 of adenine 37 in tRNAs. m2A2503 modification seems to play a crucial role in the proofreading step occurring at the peptidyl transferase center and thus would serve to optimize ribosomal fidelity. This chain is Dual-specificity RNA methyltransferase RlmN, found in Azorhizobium caulinodans (strain ATCC 43989 / DSM 5975 / JCM 20966 / LMG 6465 / NBRC 14845 / NCIMB 13405 / ORS 571).